Reading from the N-terminus, the 121-residue chain is Large ribosomal subunit protein uL18 (121 aa).

This sequence belongs to the universal ribosomal protein uL18 family. In terms of assembly, part of the 50S ribosomal subunit; part of the 5S rRNA/L5/L18/L25 subcomplex. Contacts the 5S and 23S rRNAs.

In terms of biological role, this is one of the proteins that bind and probably mediate the attachment of the 5S RNA into the large ribosomal subunit, where it forms part of the central protuberance. This Burkholderia multivorans (strain ATCC 17616 / 249) protein is Large ribosomal subunit protein uL18.